Reading from the N-terminus, the 475-residue chain is Ribulose bisphosphate carboxylase large chain (475 aa).

Positions 1–2 are excised as a propeptide; that stretch reads MS. Residue proline 3 is modified to N-acetylproline. The residue at position 14 (lysine 14) is an N6,N6,N6-trimethyllysine. Residues asparagine 123 and threonine 173 each coordinate substrate. The active-site Proton acceptor is the lysine 175. Lysine 177 contributes to the substrate binding site. Mg(2+) is bound by residues lysine 201, aspartate 203, and glutamate 204. Lysine 201 is subject to N6-carboxylysine. The active-site Proton acceptor is histidine 294. Arginine 295, histidine 327, and serine 379 together coordinate substrate.

The protein belongs to the RuBisCO large chain family. Type I subfamily. As to quaternary structure, heterohexadecamer of 8 large chains and 8 small chains; disulfide-linked. The disulfide link is formed within the large subunit homodimers. The cofactor is Mg(2+). The disulfide bond which can form in the large chain dimeric partners within the hexadecamer appears to be associated with oxidative stress and protein turnover.

Its subcellular location is the plastid. The protein resides in the chloroplast. The enzyme catalyses 2 (2R)-3-phosphoglycerate + 2 H(+) = D-ribulose 1,5-bisphosphate + CO2 + H2O. It carries out the reaction D-ribulose 1,5-bisphosphate + O2 = 2-phosphoglycolate + (2R)-3-phosphoglycerate + 2 H(+). Its function is as follows. RuBisCO catalyzes two reactions: the carboxylation of D-ribulose 1,5-bisphosphate, the primary event in carbon dioxide fixation, as well as the oxidative fragmentation of the pentose substrate in the photorespiration process. Both reactions occur simultaneously and in competition at the same active site. This chain is Ribulose bisphosphate carboxylase large chain, found in Psilotum nudum (Whisk fern).